Here is a 194-residue protein sequence, read N- to C-terminus: PBAN-type neuropeptides (194 aa).

Residues 1 to 23 (MFNQTQLFVFLAVFTTSSVLGNN) form the signal peptide. L47 is subject to Leucine amide. The propeptide occupies 51–94 (SLRISTEDNRQAFFKLLEAADALKYYYDQLPYEMQADEPETRVT). 4 positions are modified to leucine amide: L103, L123, L159, and L169. Residues 172-194 (ELSYDMMPNKIRVVRSTNKTRST) constitute a propeptide that is removed on maturation.

Belongs to the pyrokinin family. Expressed in the subesophageal ganglions. Not found in corpora cardiaca, corpora allata and thoracic ganglia.

The protein localises to the secreted. In terms of biological role, a hormone that controls sex pheromone production in females and pheromone responsiveness in male. Also mediates visceral muscle contractile activity (myotropic activity). This Helicoverpa zea (Corn earworm moth) protein is PBAN-type neuropeptides.